The chain runs to 312 residues: Small ribosomal subunit protein uS2 (312 aa).

The protein belongs to the universal ribosomal protein uS2 family.

This Ruthia magnifica subsp. Calyptogena magnifica protein is Small ribosomal subunit protein uS2.